The chain runs to 146 residues: Flagellar assembly factor FliW (146 aa).

The protein belongs to the FliW family. Interacts with translational regulator CsrA and flagellin(s).

Its subcellular location is the cytoplasm. In terms of biological role, acts as an anti-CsrA protein, binds CsrA and prevents it from repressing translation of its target genes, one of which is flagellin. Binds to flagellin and participates in the assembly of the flagellum. This is Flagellar assembly factor FliW from Shouchella clausii (strain KSM-K16) (Alkalihalobacillus clausii).